A 750-amino-acid polypeptide reads, in one-letter code: GRIP and coiled-coil domain-containing protein C27D7.02c (750 aa).

Disordered stretches follow at residues 14-53 (AQGQ…AKNM) and 188-280 (KTVE…RDIA). Basic and acidic residues-rich tracts occupy residues 18–34 (EEAK…DQLR) and 188–198 (KTVETKNDVPE). Residues 28 to 182 (QEEDQLRRNN…AQSIEQEVIS (155 aa)) are a coiled coil. A compositionally biased stretch (polar residues) spans 201-213 (RPSTDTIGVSSAL). The stretch at 213-243 (LSKKKKKRNRKNQKKKSTKQNIEATTENDAL) forms a coiled coil. Over residues 214–230 (SKKKKKRNRKNQKKKST) the composition is skewed to basic residues. The span at 233–251 (NIEATTENDALSESISTPD) shows a compositional bias: polar residues. Residues 269-280 (ADSKEEERRDIA) show a composition bias toward basic and acidic residues. Positions 344 to 665 (KLVEELTKQL…YEHLQKSFKN (322 aa)) form a coiled coil. Residues 672-703 (KQQPSNHGRNSSVSRSSSSVEVNSKHPGSDDM) are disordered. Low complexity predominate over residues 676–693 (SNHGRNSSVSRSSSSVEV). Basic and acidic residues predominate over residues 694–703 (NSKHPGSDDM). One can recognise a GRIP domain in the interval 700–748 (SDDMLIDKEYTRNILFQFLEQRDRRPEIVNLLSILLDLSEEQKQKLLSV).

Its subcellular location is the cytoplasm. The sequence is that of GRIP and coiled-coil domain-containing protein C27D7.02c from Schizosaccharomyces pombe (strain 972 / ATCC 24843) (Fission yeast).